Consider the following 49-residue polypeptide: uncharacterized protein (49 aa).

A helical transmembrane segment spans residues 5–27; sequence ILEILSAFIRILFKLLYCWALFF.

The protein resides in the membrane. This is an uncharacterized protein from Saccharomyces cerevisiae (strain ATCC 204508 / S288c) (Baker's yeast).